Here is a 450-residue protein sequence, read N- to C-terminus: Phosphomethylpyrimidine synthase (450 aa).

Substrate-binding positions include Asn80, Met109, Tyr138, His173, 193-195 (SRG), 234-237 (DSLR), and Glu273. Residue His277 coordinates Zn(2+). Residue Tyr300 coordinates substrate. Residue His341 coordinates Zn(2+). [4Fe-4S] cluster contacts are provided by Cys421, Cys424, and Cys429.

The protein belongs to the ThiC family. Homodimer. Requires [4Fe-4S] cluster as cofactor.

It carries out the reaction 5-amino-1-(5-phospho-beta-D-ribosyl)imidazole + S-adenosyl-L-methionine = 4-amino-2-methyl-5-(phosphooxymethyl)pyrimidine + CO + 5'-deoxyadenosine + formate + L-methionine + 3 H(+). It functions in the pathway cofactor biosynthesis; thiamine diphosphate biosynthesis. Catalyzes the synthesis of the hydroxymethylpyrimidine phosphate (HMP-P) moiety of thiamine from aminoimidazole ribotide (AIR) in a radical S-adenosyl-L-methionine (SAM)-dependent reaction. The protein is Phosphomethylpyrimidine synthase of Campylobacter fetus subsp. fetus (strain 82-40).